The sequence spans 452 residues: Keratin, type I cytoskeletal 15 (452 aa).

Positions 1–97 are head; the sequence is MATTFLQTSS…GGDGGLLSGN (97 aa). 5 positions are modified to phosphoserine: Ser15, Ser16, Ser28, Ser33, and Ser47. Residues 98-133 are coil 1A; sequence EKVTMQNLNDRLASYLDKVRALEQANTELEVKIRDW. Residues 98 to 410 form the IF rod domain; sequence EKVTMQNLND…NLLEGQDAKM (313 aa). Position 124 is a phosphothreonine (Thr124). The linker 1 stretch occupies residues 134-152; that stretch reads YQKQSPASPDRDYSHYFKT. A coil 1B region spans residues 153 to 244; it reads MEEIRDKILA…KNHEEEMKEF (92 aa). The tract at residues 245-264 is linker 12; the sequence is SSQLAGQVNVEMDAAPGVDL. The interval 265 to 406 is coil 2; sequence TRMLAEMREQ…ATYRNLLEGQ (142 aa). Lys293 is covalently cross-linked (Glycyl lysine isopeptide (Lys-Gly) (interchain with G-Cter in SUMO2)). Phosphothreonine is present on residues Thr294 and Thr316. The segment at 407 to 452 is tail; the sequence is DAKMAGIGVREGSSGGGGSSSSSSNFHISVEESVDGKVVSSRKREI. The disordered stretch occupies residues 413–452; sequence IGVREGSSGGGGSSSSSSNFHISVEESVDGKVVSSRKREI. Lys443 participates in a covalent cross-link: Glycyl lysine isopeptide (Lys-Gly) (interchain with G-Cter in SUMO1); alternate. Lys443 participates in a covalent cross-link: Glycyl lysine isopeptide (Lys-Gly) (interchain with G-Cter in SUMO2); alternate.

This sequence belongs to the intermediate filament family. Heterotetramer of two type I and two type II keratins. Forms a heterodimer with KRT14. Interacts with PLEC isoform 1C, when in a heterodimer with KRT14. Interacts with NOD2. In terms of tissue distribution, expressed strongly in the basal cell layer at the tips of rete-like prominences (RLPs) of adult dorsal tongue, outer root sheath (ORS) of hair follicle and skin epidermis (at protein level).

In the absence of KRT14, makes a bona fide, but ultrastructurally distinct keratin filament network with KRT5. In Mus musculus (Mouse), this protein is Keratin, type I cytoskeletal 15 (Krt15).